Reading from the N-terminus, the 269-residue chain is Putative hydro-lyase Swoo_1731 (269 aa).

It belongs to the D-glutamate cyclase family.

The protein is Putative hydro-lyase Swoo_1731 of Shewanella woodyi (strain ATCC 51908 / MS32).